The following is an 868-amino-acid chain: Cytosolic phospholipase A2 epsilon (868 aa).

Residues 1–46 are disordered; sequence MSLQASEGCPGLGTNVFVPQSPQTDEEGSRSGRSFSEFEDTQDLDT. One can recognise a C2 domain in the interval 46–170; the sequence is TPGLPPFCPM…CFRKKTHVKF (125 aa). Ca(2+)-binding residues include Asp-84, Asp-90, Asp-140, Asp-142, and Asp-148. The region spanning 324–856 is the PLA2c domain; sequence PCPETLDVRL…TLLQALRLAV (533 aa). The active-site Nucleophile is the Ser-412. The Proton acceptor role is filled by Asp-700. Ser-800 carries the post-translational modification Phosphoserine. Residues 857–868 form a required for localization at membrane structures region; it reads EKKKRLKGQCPS.

The cofactor is Ca(2+).

Its subcellular location is the cytoplasm. The protein localises to the cytosol. It is found in the early endosome membrane. The protein resides in the lysosome membrane. It localises to the cell membrane. It catalyses the reaction a 1,2-diacyl-sn-glycero-3-phosphoethanolamine + a 1,2-diacyl-sn-glycero-3-phosphocholine = an N-acyl-1,2-diacyl-sn-glycero-3-phosphoethanolamine + a 2-acyl-sn-glycero-3-phosphocholine + H(+). The enzyme catalyses 1-hexadecanoyl-2-octadecanoyl-sn-glycero-3-phosphocholine + 1,2-di-(9Z-octadecenoyl)-sn-glycero-3-phosphoethanolamine = 2-octadecanoyl-sn-glycero-3-phosphocholine + N-hexadecanoyl-1,2-di-(9Z-octadecenoyl)-sn-glycero-3-phosphoethanolamine + H(+). The catalysed reaction is 1-octadecanoyl-2-hexadecanoyl-sn-glycero-3-phosphocholine + 1,2-di-(9Z-octadecenoyl)-sn-glycero-3-phosphoethanolamine = N-octadecanoyl-1,2-di-(9Z-octadecenoyl)-sn-glycero-3-phosphoethanolamine + 2-hexadecanoyl-sn-glycero-3-phosphocholine + H(+). It carries out the reaction 1,2-di-(9Z-octadecenoyl)-sn-glycero-3-phosphoethanolamine + 1,2-dihexadecanoyl-sn-glycero-3-phosphocholine = N-hexadecanoyl-1,2-di-(9Z-octadecenoyl)-sn-glycero-3-phosphoethanolamine + 2-hexadecanoyl-sn-glycero-3-phosphocholine + H(+). It catalyses the reaction 1,2-di-(5Z,8Z,11Z,14Z-eicosatetraenoyl)-sn-glycero-3-phosphocholine + 1,2-di-(9Z-octadecenoyl)-sn-glycero-3-phosphoethanolamine = N-(5Z,8Z,11Z,14Z-eicosatetraenoyl)-1,2-di-(9Z-octadecenoyl)-sn-glycero-3-phosphoethanolamine + 2-(5Z,8Z,11Z,14Z)-eicosatetraenoyl-sn-glycero-3-phosphocholine + H(+). The enzyme catalyses 2 1,2-di-(9Z-octadecenoyl)-sn-glycero-3-phosphoethanolamine = N,1,2-tri-(9Z-octadecenoyl)-sn-glycero-3-phosphoethanolamine + 2-(9Z-octadecenoyl)-sn-glycero-3-phosphoethanolamine + H(+). The catalysed reaction is 1-(1Z-octadecenyl)-2-(9Z-octadecenoyl)-sn-glycero-3-phosphoethanolamine + 1,2-dihexadecanoyl-sn-glycero-3-phosphocholine = 1-O-(1Z-octadecenoyl)-2-(9Z-octadecenoyl)-sn-glycero-3-phospho-N-hexadecanoyl-ethanolamine + 2-hexadecanoyl-sn-glycero-3-phosphocholine + H(+). It carries out the reaction a 1,2-diacyl-sn-glycero-3-phosphocholine + H2O = a 1-acyl-sn-glycero-3-phosphocholine + a fatty acid + H(+). It catalyses the reaction 1-hexadecanoyl-2-(5Z,8Z,11Z,14Z-eicosatetraenoyl)-sn-glycero-3-phosphocholine + H2O = 1-hexadecanoyl-sn-glycero-3-phosphocholine + (5Z,8Z,11Z,14Z)-eicosatetraenoate + H(+). The enzyme catalyses 1-hexadecanoyl-sn-glycero-3-phosphocholine + H2O = sn-glycerol 3-phosphocholine + hexadecanoate + H(+). Its activity is regulated as follows. Stimulated by cytosolic Ca(2+). Stimulated by anionic phospholipids such as phosphatidylserines, phosphatidates and phosphatidylinositols. Functionally, calcium-dependent N-acyltransferase involved in the biosynthesis of N-acyl ethanolamines (NAEs) in the brain. Transfers the sn-1 fatty acyl chain of phosphatidylcholine (fatty acyl donor) to the amine group of phosphatidylethanolamine (fatty acyl acceptor) to generate N-acyl phosphatidylethanolamine (NAPE). Similarly can use plasmenylethanolamine as a fatty acyl acceptor to form N-acyl plasmenylethanolamine (N-Acyl-PlsEt). Both NAPE and N-Acyl-PlsEt can serve as precursors of bioactive NAEs like N-arachidonoyl phosphatidylethanolamine also called anandamide. Has weak phospholipase A2 and lysophospholipase activities. Regulates intracellular membrane trafficking that requires modulation of membrane curvature as it occurs by enrichment in lysophospholipids. Promotes tubule formation involved in clathrin-independent endocytotic trafficking and cargo recycling. The polypeptide is Cytosolic phospholipase A2 epsilon (Homo sapiens (Human)).